Here is a 156-residue protein sequence, read N- to C-terminus: Small ribosomal subunit protein uS7 (156 aa).

It belongs to the universal ribosomal protein uS7 family. Part of the 30S ribosomal subunit. Contacts proteins S9 and S11.

One of the primary rRNA binding proteins, it binds directly to 16S rRNA where it nucleates assembly of the head domain of the 30S subunit. Is located at the subunit interface close to the decoding center, probably blocks exit of the E-site tRNA. The protein is Small ribosomal subunit protein uS7 of Salinispora tropica (strain ATCC BAA-916 / DSM 44818 / JCM 13857 / NBRC 105044 / CNB-440).